The sequence spans 206 residues: MRPLQSYKAFEDHMAQEPVEDTDPSTLSFNTSDKYPVQDTELPKAEECNTITLNCPPNSDMKNQGEENGFPDSTGDPLPEISKDNSCKENCTCSSCLLRAPTISDLLNDQDLLDVIRIKLDPCHPTVKNWRNFASKWGMSYDELCFLEQRPQSPTLEFLLRNSQRTVGQLMELCRLYHRADVEKVLRRWVDEEWPKRERGDPSRHF.

Disordered stretches follow at residues 1–36 (MRPL…DKYP) and 52–77 (TLNC…TGDP). 2 stretches are compositionally biased toward polar residues: residues 24–33 (PSTLSFNTSD) and 52–62 (TLNCPPNSDMK). The region spanning 114–190 (DVIRIKLDPC…DVEKVLRRWV (77 aa)) is the Death domain.

Self-associates and binds to EDAR, TRAF1, TRAF2 and TRAF3.

Its subcellular location is the cytoplasm. Its function is as follows. Adapter protein that interacts with EDAR DEATH domain and couples the receptor to EDA signaling pathway during morphogenesis of ectodermal organs. Mediates the activation of NF-kappa-B. This chain is Ectodysplasin-A receptor-associated adapter protein (EDARADD), found in Macaca fascicularis (Crab-eating macaque).